The primary structure comprises 112 residues: Toxin-like structure LSTX-D10 (112 aa).

An N-terminal signal peptide occupies residues 1–20; that stretch reads MMKVLVVVALLVTLISYSSS. Positions 21 to 41 are excised as a propeptide; that stretch reads EGIDDLEADELLSLMANEQTR. 4 disulfides stabilise this stretch: C45/C60, C52/C69, C59/C84, and C71/C82.

This sequence belongs to the neurotoxin 19 (CSTX) family. 01 subfamily. As to expression, expressed by the venom gland.

The protein localises to the secreted. The polypeptide is Toxin-like structure LSTX-D10 (Lycosa singoriensis (Wolf spider)).